The primary structure comprises 1174 residues: Male determiner protein Mdmd(Y) (1174 aa).

Residues 1–15 show a composition bias toward basic and acidic residues; it reads MNATDAESRKPENKP. Disordered regions lie at residues 1–51, 79–109, and 136–259; these read MNAT…SGQR, RKDGSNEMLPKEDSINTNHNYTTDSDEHPVE, and KQLS…LRRS. Low complexity predominate over residues 16–35; it reads SSESSSSGSTSGSSDGEVSS. The span at 36–47 shows a compositional bias: polar residues; the sequence is KTYFKNNKSKVL. A compositionally biased stretch (basic and acidic residues) spans 79–92; the sequence is RKDGSNEMLPKEDS. The span at 138 to 153 shows a compositional bias: low complexity; it reads LSAYRSRSRSTRLSYS. The segment covering 167–180 has biased composition (basic residues); that stretch reads SRYKKSVLRNRRTS. Basic and acidic residues predominate over residues 183-200; it reads HGRDSSTTKRSVSRDKDN. Residues 201–223 show a composition bias toward basic residues; the sequence is RLRRRIGSSRSHTRSHSRFRRSE. Basic and acidic residues predominate over residues 235-259; sequence RSQERRHERRRSMSSDYERIALRRS. The 184-residue stretch at 348 to 531 folds into the MIF4G domain; the sequence is KKYIHGYINK…KVLFQVRRDG (184 aa). Residues 597–608 are compositionally biased toward low complexity; it reads DSDGSFGSGSNS. The segment at 597–616 is disordered; sequence DSDGSFGSGSNSETALSDCD. Positions 641–757 constitute an MI domain; that stretch reads ALRRTIYLTL…SWDVLDCIKL (117 aa). Residues 840–857 are compositionally biased toward low complexity; the sequence is SAPSSSSSSSLSSELSAP. Disordered stretches follow at residues 840 to 1045 and 1089 to 1135; these read SAPS…SRTK and KGGP…SREY. Basic residues-rich tracts occupy residues 869–886 and 895–909; these read KKKHKGKNKKMTKKKNPS and IVGKNKIAAKNKTIK. Residues 910-924 are compositionally biased toward basic and acidic residues; it reads RRTDKDNSSSKDNFL. Residues 926 to 957 are compositionally biased toward low complexity; that stretch reads SESSSNESISLDSLSSELFAPSSYSSSESSND. The span at 963–1001 shows a compositional bias: basic residues; that stretch reads KHKGKNKKMTKKKNPSNKREKTKKKLSKNKKAPNKNTKK. A compositionally biased stretch (low complexity) spans 1010–1020; the sequence is SSESSISESKS. The segment covering 1034–1045 has biased composition (basic residues); it reads RKKRVTSKSRTK. Residues 1089-1118 are compositionally biased toward basic and acidic residues; sequence KGGPNCRKDNYGNRQNHEISQRHDSEIKRR. Over residues 1119 to 1130 the composition is skewed to basic residues; the sequence is REERKKRHHEKN.

The protein belongs to the CWC22 family. Component of the spliceosome C complex.

It is found in the nucleus speckle. In terms of biological role, male determiner protein (M-factor) that controls male somatic sexual differentiation. Acts as a dominant factor that regulates the mRNA splicing of transformer (tra) and doublesex (dsx) transcripts and promotes expression of male splice forms of tra and dsx. Probably acts as a component of the spliceosome C complex required for mRNA splicing factor and exon-junction complex (EJC) assembly. Hinders eIF4AIII from non-specifically binding RNA and escorts it to the splicing machinery to promote EJC assembly on mature mRNAs. The protein is Male determiner protein Mdmd(Y) of Musca domestica (House fly).